We begin with the raw amino-acid sequence, 1386 residues long: Pleckstrin homology domain-containing family G member 2 (1386 aa).

Disordered stretches follow at residues 1-21 and 36-82; these read MPEGAQGLSLSKPSPSLGCGR and TAPA…PLPG. Low complexity-rich tracts occupy residues 8–17 and 45–62; these read LSLSKPSPSL and SPRGSGSSTSLSTVGSEG. Residue Ser-90 is modified to Phosphoserine. Residues 102 to 283 form the DH domain; the sequence is RLERVAREIV…TAVAWYINDM (182 aa). The PH domain maps to 313–411; the sequence is ELVLEGAFRG…WIHCLQRLFF (99 aa). Disordered stretches follow at residues 436 to 540, 554 to 612, 701 to 739, 790 to 815, and 829 to 859; these read KSKP…PSGT, GLRD…PSPL, EPAEAPATRRELFSGSNPGKLGEPPSGGKAGPEEDEEGV, ILEDSDLGGDSGSGKAGAPSSERTAS, and QQMQRAETRASANAPRRRPRVLAQPQPSPCL. Thr-445 carries the phosphothreonine modification. Ser-450 and Ser-469 each carry phosphoserine. Acidic residues predominate over residues 592-603; that stretch reads SEEEEEEEEGLE. Phosphoserine occurs at positions 911 and 1049. Disordered stretches follow at residues 1037–1099 and 1162–1191; these read PVPK…PLPC and TSPKQGSLPDIQGPAAAPPLPEPSLTDTQV. 2 stretches are compositionally biased toward polar residues: residues 1048–1059 and 1073–1086; these read ESPTNIPLTKQG and QPIQPLSWHGSSLD. Position 1257 is a phosphothreonine (Thr-1257). A phosphoserine mark is found at Ser-1261 and Ser-1310. Disordered regions lie at residues 1291–1333 and 1367–1386; these read ARRQ…ARRL and TQESMGLHRAQGAPDAPFHM. The segment covering 1301 to 1317 has biased composition (low complexity); that stretch reads PAASRGSWSSAPTSRAS. Positions 1318–1330 are enriched in pro residues; it reads SPPPQPQPPPPPA.

Its function is as follows. May be a transforming oncogene with exchange activity for CDC42. May be a guanine-nucleotide exchange factor (GEF) for RAC1 and CDC42. Activated by the binding to subunits beta and gamma of the heterotrimeric guanine nucleotide-binding protein (G protein). Involved in the regulation of actin polymerization. This chain is Pleckstrin homology domain-containing family G member 2 (PLEKHG2), found in Homo sapiens (Human).